Consider the following 409-residue polypeptide: Iron(III) salmochelin esterase (409 aa).

Belongs to the Fes family.

Its subcellular location is the cytoplasm. The enzyme catalyses Fe(III)-C-5-deoxy-beta-D-glucosyl-enterobactin + H2O = Fe(III)-{di[N-(2,3-dihydroxybenzoyl)-L-seryl]-N-(C-5-[deoxy-beta-D-glucosyl]-2,3-dihydroxybenzoyl)-L-serine} + H(+). The catalysed reaction is Fe(III)-{di[N-(2,3-dihydroxybenzoyl)-L-seryl]-N-(C-5-[deoxy-beta-D-glucosyl]-2,3-dihydroxybenzoyl)-L-serine} + H2O + H(+) = Fe(III)-{N-(2,3-dihydroxybenzoyl)-L-seryl-N-(C-5-[deoxy-beta-D-glucosyl]-2,3-dihydroxybenzoyl)-L-serine} + N-(2,3-dihydroxybenzoyl)-L-serine. It carries out the reaction Fe(III)-{N-(2,3-dihydroxybenzoyl)-L-seryl-[N-(C-5-[deoxy-beta-D-glucosyl]-2,3-dihydroxybenzoyl)-L-serine]2} + H2O + H(+) = Fe(III)-{N-(2,3-dihydroxybenzoyl)-L-seryl-N-(C-5-[deoxy-beta-D-glucosyl]-2,3-dihydroxybenzoyl)-L-serine} + N-(C-5-[deoxy-beta-D-glucosyl]-2,3-dihydroxybenzoyl)-L-serine. It catalyses the reaction Fe(III)-di(C-5-deoxy-beta-D-glucosyl)-enterobactin + H2O = Fe(III)-{N-(2,3-dihydroxybenzoyl)-L-seryl-[N-(C-5-[deoxy-beta-D-glucosyl]-2,3-dihydroxybenzoyl)-L-serine]2} + H(+). The enzyme catalyses Fe(III)-{N-(2,3-dihydroxybenzoyl)-L-seryl-[N-(C-5-[deoxy-beta-D-glucosyl]-2,3-dihydroxybenzoyl)-L-serine]2} + H2O + H(+) = Fe(III)-[N-(C-5-[deoxy-beta-D-glucosyl]-2,3-dihydroxybenzoyl)-L-serine]2 + N-(2,3-dihydroxybenzoyl)-L-serine. The catalysed reaction is Fe(III)-[N-(C-5-[deoxy-beta-D-glucosyl]-2,3-dihydroxybenzoyl)-L-serine]2 + H2O + H(+) = Fe(III)-[N-(C-5-[deoxy-beta-D-glucosyl]-2,3-dihydroxybenzoyl)-L-serine] + N-(C-5-[deoxy-beta-D-glucosyl]-2,3-dihydroxybenzoyl)-L-serine. Its function is as follows. Catalyzes the hydrolysis of both the apo and Fe3(+)-bound forms of enterobactin (Ent), monoglucosyl-C-Ent (MGE), diglucosyl-C-Ent (DGE) and triglucosyl-C-Ent (TGE). Shows higher catalytic efficiencies on Fe3(+)-bound forms. The initial linear trimer products are, in turn, very good substrates for further hydrolytic cleavage by IroD, leading to complete degradation of the trilactone to DHB-Ser and/or Glc-DHB-Ser monomers. Hydrolyzes MGE and DGE regioselectively. May be the ferric MGE/DGE esterase responsible for cytoplasmic iron release. This chain is Iron(III) salmochelin esterase, found in Escherichia coli O6:H1 (strain CFT073 / ATCC 700928 / UPEC).